The chain runs to 479 residues: Hydrogenase-4 component D (479 aa).

A run of 15 helical transmembrane segments spans residues asparagine 3–proline 23, tryptophan 30–tyrosine 50, valine 55–aspartate 75, leucine 80–leucine 100, alanine 117–glycine 137, alanine 168–leucine 188, leucine 208–alanine 228, threonine 238–alanine 258, valine 270–tyrosine 290, leucine 300–phenylalanine 320, isoleucine 330–leucine 350, leucine 369–phenylalanine 389, asparagine 390–tryptophan 410, isoleucine 411–isoleucine 431, and leucine 458–leucine 478.

Belongs to the complex I subunit 5 family.

Its subcellular location is the cell inner membrane. Its function is as follows. Possible component of hydrogenase 4. In Escherichia coli (strain K12), this protein is Hydrogenase-4 component D.